Reading from the N-terminus, the 904-residue chain is DNA mismatch repair protein MutS (904 aa).

An ATP-binding site is contributed by 655–662 (GPNMGGKS).

The protein belongs to the DNA mismatch repair MutS family.

Its function is as follows. This protein is involved in the repair of mismatches in DNA. It is possible that it carries out the mismatch recognition step. This protein has a weak ATPase activity. In Rhizorhabdus wittichii (strain DSM 6014 / CCUG 31198 / JCM 15750 / NBRC 105917 / EY 4224 / RW1) (Sphingomonas wittichii), this protein is DNA mismatch repair protein MutS.